Here is a 159-residue protein sequence, read N- to C-terminus: Transcriptional repressor NrdR (159 aa).

Over residues 1–11 the composition is skewed to polar residues; sequence MQCPSCQNTDS. Residues 1-20 are disordered; sequence MQCPSCQNTDSRVLESRSAD. A zinc finger spans residues 3-34; that stretch reads CPSCQNTDSRVLESRSADSGRSVRRRRECLNC. The region spanning 49-139 is the ATP-cone domain; that stretch reads INVLKRSGAK…VYRQFNGIND (91 aa).

The protein belongs to the NrdR family. The cofactor is Zn(2+).

Functionally, negatively regulates transcription of bacterial ribonucleotide reductase nrd genes and operons by binding to NrdR-boxes. The polypeptide is Transcriptional repressor NrdR (Prochlorococcus marinus (strain NATL1A)).